Here is a 248-residue protein sequence, read N- to C-terminus: UPF0736 protein BCE_1296 (248 aa).

The protein belongs to the UPF0736 family.

The protein is UPF0736 protein BCE_1296 of Bacillus cereus (strain ATCC 10987 / NRS 248).